Consider the following 379-residue polypeptide: MAWRGWAQRGWGCGQAWGASVGGRSCEELTAVLTPPQLLGRRFNFFIQQKCGFRKAPRKVEPRRSDPGTSGEAYKRSALIPPVEETVFYPSPYPIRSLIKPLFFTVGFTGCAFGSAAIWQYESLKSRVQSYFDGIKADWLDSIRPQKEGDFRKEINKWWNNLSDGQRTVTGIIAANVLVFCLWRVPSLQRTMIRYFTSNPASKVLCSPMLLSTFSHFSLFHMAANMYVLWSFSSSIVNILGQEQFMAVYLSAGVISNFVSYVGKVATGRYGPSLGASGAIMTVLAAVCTKIPEGRLAIIFLPMFTFTAGNALKAIIAMDTAGMILGWKFFDHAAHLGGALFGIWYVTYGHELIWKNREPLVKIWHEIRTNGPKKGGGSK.

The N-terminal 52 residues, 1–52 (MAWRGWAQRGWGCGQAWGASVGGRSCEELTAVLTPPQLLGRRFNFFIQQKCG), are a transit peptide targeting the mitochondrion. Residues 53–101 (FRKAPRKVEPRRSDPGTSGEAYKRSALIPPVEETVFYPSPYPIRSLIKP) are Mitochondrial matrix-facing. Phosphoserine is present on S65. Residue T69 is modified to Phosphothreonine. Phosphoserine is present on S70. Residues 102–121 (LFFTVGFTGCAFGSAAIWQY) traverse the membrane as a helical segment. The Mitochondrial intermembrane portion of the chain corresponds to 122-167 (ESLKSRVQSYFDGIKADWLDSIRPQKEGDFRKEINKWWNNLSDGQR). Residues 168-187 (TVTGIIAANVLVFCLWRVPS) form a helical membrane-spanning segment. The Mitochondrial matrix segment spans residues 188-207 (LQRTMIRYFTSNPASKVLCS). A helical membrane pass occupies residues 208–230 (PMLLSTFSHFSLFHMAANMYVLW). The Mitochondrial intermembrane segment spans residues 231 to 244 (SFSSSIVNILGQEQ). A helical transmembrane segment spans residues 245 to 262 (FMAVYLSAGVISNFVSYV). At 263-272 (GKVATGRYGP) the chain is on the mitochondrial matrix side. The helical transmembrane segment at 273 to 289 (SLGASGAIMTVLAAVCT) threads the bilayer. S277 (nucleophile) is an active-site residue. At 290 to 295 (KIPEGR) the chain is on the mitochondrial intermembrane side. The chain crosses the membrane as a helical span at residues 296–318 (LAIIFLPMFTFTAGNALKAIIAM). Over 319-332 (DTAGMILGWKFFDH) the chain is Mitochondrial matrix. A helical membrane pass occupies residues 333 to 354 (AAHLGGALFGIWYVTYGHELIW). H335 is an active-site residue. Residues 355-379 (KNREPLVKIWHEIRTNGPKKGGGSK) lie on the Mitochondrial intermembrane side of the membrane.

Belongs to the peptidase S54 family. As to quaternary structure, interacts with PSEN1 and PSEN2. Binds OPA1. In terms of processing, P-beta is proteolytically processed (beta-cleavage) in a PARL-dependent manner. The cleavage is inhibited when residues Ser-65, Thr-69 and Ser-70 are all phosphorylated.

Its subcellular location is the mitochondrion inner membrane. It localises to the nucleus. It catalyses the reaction Cleaves type-1 transmembrane domains using a catalytic dyad composed of serine and histidine that are contributed by different transmembrane domains.. Its function is as follows. Required for the control of apoptosis during postnatal growth. Essential for proteolytic processing of an antiapoptotic form of OPA1 which prevents the release of mitochondrial cytochrome c in response to intrinsic apoptotic signals. Required for the maturation of PINK1 into its 52kDa mature form after its cleavage by mitochondrial-processing peptidase (MPP). Promotes cleavage of serine/threonine-protein phosphatase PGAM5 in damaged mitochondria in response to loss of mitochondrial membrane potential. Mediates differential cleavage of PINK1 and PGAM5 depending on the health status of mitochondria, disassociating from PINK1 and associating with PGAM5 in response to mitochondrial membrane potential loss. Required for processing of CLPB into a form with higher protein disaggregase activity by removing an autoinhibitory N-terminal peptide. Promotes processing of DIABLO/SMAC in the mitochondrion which is required for DIABLO apoptotic activity. Also required for cleavage of STARD7 and TTC19. Promotes changes in mitochondria morphology regulated by phosphorylation of P-beta domain. The sequence is that of Presenilin-associated rhomboid-like protein, mitochondrial (PARL) from Homo sapiens (Human).